The chain runs to 461 residues: Serine/threonine-protein kinase ppk24, mitochondrial (461 aa).

Residues 120-416 (FQHLKSIAKG…LDSILGTAWV (297 aa)) form the Protein kinase domain. ATP contacts are provided by residues 126–134 (IAKGATSTI) and lysine 153. The active-site Proton acceptor is the aspartate 256.

This sequence belongs to the protein kinase superfamily. Ser/Thr protein kinase family.

The protein resides in the mitochondrion. The enzyme catalyses L-seryl-[protein] + ATP = O-phospho-L-seryl-[protein] + ADP + H(+). It catalyses the reaction L-threonyl-[protein] + ATP = O-phospho-L-threonyl-[protein] + ADP + H(+). Has a role late in meiosis. This chain is Serine/threonine-protein kinase ppk24, mitochondrial (ppk24), found in Schizosaccharomyces pombe (strain 972 / ATCC 24843) (Fission yeast).